The chain runs to 682 residues: Potassium-transporting ATPase ATP-binding subunit (682 aa).

The next 4 membrane-spanning stretches (helical) occupy residues proline 34–valine 54, isoleucine 58–phenylalanine 78, isoleucine 219–leucine 239, and valine 254–isoleucine 274. Catalysis depends on aspartate 307, which acts as the 4-aspartylphosphate intermediate. Residues aspartate 344, glutamate 348, phenylalanine 377–serine 384, and lysine 395 each bind ATP. Mg(2+)-binding residues include aspartate 518 and aspartate 522. 3 helical membrane passes run phenylalanine 588–methionine 608, alanine 616–leucine 636, and leucine 662–alanine 682.

The protein belongs to the cation transport ATPase (P-type) (TC 3.A.3) family. Type IA subfamily. In terms of assembly, the system is composed of three essential subunits: KdpA, KdpB and KdpC.

The protein resides in the cell inner membrane. It carries out the reaction K(+)(out) + ATP + H2O = K(+)(in) + ADP + phosphate + H(+). In terms of biological role, part of the high-affinity ATP-driven potassium transport (or Kdp) system, which catalyzes the hydrolysis of ATP coupled with the electrogenic transport of potassium into the cytoplasm. This subunit is responsible for energy coupling to the transport system and for the release of the potassium ions to the cytoplasm. The protein is Potassium-transporting ATPase ATP-binding subunit of Salmonella dublin (strain CT_02021853).